The chain runs to 171 residues: uncharacterized protein (171 aa).

The next 2 helical transmembrane spans lie at 13 to 35 and 50 to 72; these read VGAS…IATA and ATVL…AYVV.

It is found in the cell membrane. This is an uncharacterized protein from Treponema pallidum (strain Nichols).